We begin with the raw amino-acid sequence, 258 residues long: MLAKRIIPCLDVKDGQVVKGVQFRNHEIIGDIVPLAQRYAQEGADELVFYDITASSDGRVVDKSWVSRVAEVIDIPFCVAGGIKSPEDASQILSFGADKISINSPALADPTLISRLADRFGVQCIVVGIDTWFEAETGKYHVNQYTGDESRTRVTEWETLDWVKEVQKRGAGEIVLNMMNQDGVRNGYDLEQLRLVREVCKVPLIASGGAGTMEHFLEAFRDVDVDGALAASVFHKQIINIGDLKRFLSEQGVEIRLC.

Residues aspartate 11 and aspartate 130 contribute to the active site.

The protein belongs to the HisA/HisF family. Heterodimer of HisH and HisF.

It is found in the cytoplasm. It catalyses the reaction 5-[(5-phospho-1-deoxy-D-ribulos-1-ylimino)methylamino]-1-(5-phospho-beta-D-ribosyl)imidazole-4-carboxamide + L-glutamine = D-erythro-1-(imidazol-4-yl)glycerol 3-phosphate + 5-amino-1-(5-phospho-beta-D-ribosyl)imidazole-4-carboxamide + L-glutamate + H(+). It participates in amino-acid biosynthesis; L-histidine biosynthesis; L-histidine from 5-phospho-alpha-D-ribose 1-diphosphate: step 5/9. IGPS catalyzes the conversion of PRFAR and glutamine to IGP, AICAR and glutamate. The HisF subunit catalyzes the cyclization activity that produces IGP and AICAR from PRFAR using the ammonia provided by the HisH subunit. The sequence is that of Imidazole glycerol phosphate synthase subunit HisF from Serratia proteamaculans (strain 568).